The sequence spans 409 residues: MDPTLTELLHANLEWIFVGGKGGVGKTTTSCALATLFATTPISDAASPGGTRPRRVLLISTDPAHNLSDAFNQRFGPHPTPVKGLEESLAAMEVDPKNFTHGALMSSLTGTKRDGSASSLPEEAAADAAQHTTTFARIGAVLKEAARTMPGIDEISVFAEILHYVRTLSYDLLIFDTAPTGHTLRLLALPQTLNSTFDKLMSLEGLAPMIEAASHLIGSNLGDLGGACGDTAGSCEQATAAPSPSSAAPGAGSAAAASPQSRWCITADEVRSTALHWRQTMEEVQARFSDPNRTSFVCVCIAEFLSVYETERLVQELMKYNIGCDSIVVNQLVLKPSSEPPCRMCSARQKIQAKYLEQIDLLYEDFHVVKMPLLSDEVRGVPALKKFARFLQEPYSPETHGYIDVQEPC.

ATP is bound at residue 21–28 (KGGVGKTT). Asp62 is a catalytic residue. Glu303 and Asn330 together coordinate ATP. 2 residues coordinate Zn(2+): Cys342 and Cys345.

This sequence belongs to the arsA ATPase family. Homodimer.

The protein resides in the cytoplasm. It localises to the endoplasmic reticulum. Its function is as follows. ATPase required for the post-translational delivery of tail-anchored (TA) proteins to the endoplasmic reticulum. Recognizes and selectively binds the transmembrane domain of TA proteins in the cytosol. This complex then targets to the endoplasmic reticulum by membrane-bound receptors, where the tail-anchored protein is released for insertion. This process is regulated by ATP binding and hydrolysis. ATP binding drives the homodimer towards the closed dimer state, facilitating recognition of newly synthesized TA membrane proteins. ATP hydrolysis is required for insertion. Subsequently, the homodimer reverts towards the open dimer state, lowering its affinity for the membrane-bound receptor, and returning it to the cytosol to initiate a new round of targeting. In Leishmania infantum, this protein is ATPase ASNA1 homolog.